Consider the following 463-residue polypeptide: Succinate--CoA ligase [ADP-forming] subunit beta, mitochondrial (463 aa).

The transit peptide at 1–53 directs the protein to the mitochondrion; sequence MAASMFYGRQLAAAALRSHRPQTTLRAAAQVLGNSGLFNKHGLQVQQQQQRTL. The 228-residue stretch at 61 to 288 folds into the ATP-grasp domain; it reads MELLQEAGVS…SNSAYRQKKI (228 aa). The residue at position 78 (Lys78) is an N6-acetyllysine. Tyr84 bears the Phosphotyrosine mark. Position 88 is an N6-acetyllysine; alternate (Lys88). Lys88 carries the post-translational modification N6-succinyllysine; alternate. ATP is bound by residues Lys98 and 105–107; that span reads GRG. N6-acetyllysine occurs at positions 129, 139, 143, and 216. The Mg(2+) site is built by Asn258 and Asp272. Ser279 carries the post-translational modification Phosphoserine. Substrate is bound at residue Asn323. Position 341 is a phosphothreonine (Thr341). Lys368 carries the N6-acetyllysine modification. 380 to 382 contributes to the substrate binding site; it reads GIM. Lys438 is modified (N6-acetyllysine).

This sequence belongs to the succinate/malate CoA ligase beta subunit family. ATP-specific subunit beta subfamily. Heterodimer of an alpha and a beta subunit. The beta subunit determines specificity for ATP. Interacts with ALAS2. The cofactor is Mg(2+).

The protein resides in the mitochondrion. It carries out the reaction succinate + ATP + CoA = succinyl-CoA + ADP + phosphate. Its pathway is carbohydrate metabolism; tricarboxylic acid cycle; succinate from succinyl-CoA (ligase route): step 1/1. ATP-specific succinyl-CoA synthetase functions in the citric acid cycle (TCA), coupling the hydrolysis of succinyl-CoA to the synthesis of ATP and thus represents the only step of substrate-level phosphorylation in the TCA. The beta subunit provides nucleotide specificity of the enzyme and binds the substrate succinate, while the binding sites for coenzyme A and phosphate are found in the alpha subunit. This chain is Succinate--CoA ligase [ADP-forming] subunit beta, mitochondrial, found in Mus musculus (Mouse).